Consider the following 162-residue polypeptide: Cytochrome B pre-mRNA-processing protein 6 (162 aa).

At S2 the chain carries N-acetylserine. Phosphothreonine is present on T97.

It is found in the mitochondrion. Its function is as follows. This protein is involved in processing of the 5' terminus and the intervening sequences of cytochrome b pre-mRNA. In Saccharomyces cerevisiae (strain ATCC 204508 / S288c) (Baker's yeast), this protein is Cytochrome B pre-mRNA-processing protein 6 (CBP6).